The following is a 338-amino-acid chain: tRNA N6-adenosine threonylcarbamoyltransferase (338 aa).

2 residues coordinate Fe cation: histidine 111 and histidine 115. Substrate-binding positions include 134–138 (LVSGG), aspartate 167, glycine 180, and asparagine 272. Aspartate 300 lines the Fe cation pocket.

This sequence belongs to the KAE1 / TsaD family. Fe(2+) is required as a cofactor.

It is found in the cytoplasm. The enzyme catalyses L-threonylcarbamoyladenylate + adenosine(37) in tRNA = N(6)-L-threonylcarbamoyladenosine(37) in tRNA + AMP + H(+). Functionally, required for the formation of a threonylcarbamoyl group on adenosine at position 37 (t(6)A37) in tRNAs that read codons beginning with adenine. Is involved in the transfer of the threonylcarbamoyl moiety of threonylcarbamoyl-AMP (TC-AMP) to the N6 group of A37, together with TsaE and TsaB. TsaD likely plays a direct catalytic role in this reaction. This is tRNA N6-adenosine threonylcarbamoyltransferase from Shewanella denitrificans (strain OS217 / ATCC BAA-1090 / DSM 15013).